We begin with the raw amino-acid sequence, 457 residues long: Phosphatidate cytidylyltransferase (457 aa).

6 consecutive transmembrane segments (helical) span residues Val71–Ile91, Phe154–Phe174, Gly188–Ile208, Gly214–Leu234, Gly255–Ser275, and Phe330–Ala350.

Belongs to the CDS family. Homodimer. Mg(2+) is required as a cofactor.

Its subcellular location is the endoplasmic reticulum membrane. It localises to the cytoplasmic vesicle. The protein localises to the secretory vesicle. The catalysed reaction is a 1,2-diacyl-sn-glycero-3-phosphate + CTP + H(+) = a CDP-1,2-diacyl-sn-glycerol + diphosphate. It functions in the pathway phospholipid metabolism; CDP-diacylglycerol biosynthesis; CDP-diacylglycerol from sn-glycerol 3-phosphate: step 3/3. Functionally, supplies CDP-diacylglycerol, which may play an important role as both a precursor to phosphoinositide biosynthesis in the plasma membrane and as a negative effector of phosphatidylinositol 4-kinase activity, thereby exerting an effect on cell proliferation via a lipid-dependent signal transduction cascade. The sequence is that of Phosphatidate cytidylyltransferase (CDS1) from Saccharomyces cerevisiae (strain ATCC 204508 / S288c) (Baker's yeast).